A 308-amino-acid chain; its full sequence is MASKSQILFIGGTGYIGKFIVEASAKAGYPTYVLVREASLSDPAKSKVIENFKALGVNFVLGDLYDHESLVKAIKQVDVVISTVGHGQLADQGKIIAAIKEAGNVKRFFPSEFGNDVDRSHAVEPAKSAFETKAKIRRAVEAEGIPYTYVSSNFFAGYFLPTLNQPGASSAPRDKVVILGDGNPKAIFNKEDDIGTYTIRAVDDPRTLNKVLYIRPPANTISFNELVSLWEKKIGKTLERIYVPEEQLLKNIQEAAVPLNVILSISHAVFVKGDHTNFEIEPSFGVEATALYPDVKYTTVDEYLNQFV.

Residues G11–G17, R36, and K45 contribute to the NADP(+) site. K133 (proton acceptor) is an active-site residue. R137 lines the NADP(+) pocket.

It belongs to the NmrA-type oxidoreductase family. Isoflavone reductase subfamily.

It carries out the reaction (-)-dehydrodiconiferyl alcohol + NADPH + H(+) = (S)-isodihydrodehydrodiconiferyl alcohol + NADP(+). It catalyses the reaction (+)-dehydrodiconiferyl alcohol + NADPH + H(+) = (R)-isodihydrodehydrodiconiferyl alcohol + NADP(+). In terms of biological role, oxidoreductase involved in lignan biosynthesis. Catalyzes the NADPH-dependent reduction of phenylcoumaran benzylic ethers. Converts dehydrodiconiferyl alcohol (DDC) to isodihydrodehydrodiconiferyl alcohol (IDDDC). In Pyrus communis (Pear), this protein is Phenylcoumaran benzylic ether reductase Pyrc5.